We begin with the raw amino-acid sequence, 270 residues long: Flagellar hook-basal body complex protein FlhO (270 aa).

This sequence belongs to the flagella basal body rod proteins family.

Functionally, not required for motility. The chain is Flagellar hook-basal body complex protein FlhO (flhO) from Bacillus subtilis (strain 168).